We begin with the raw amino-acid sequence, 159 residues long: Putative ribosomal RNA large subunit methyltransferase H (159 aa).

Residues leucine 76, glycine 108, and 127–132 contribute to the S-adenosyl-L-methionine site; that span reads FSKMTF.

Belongs to the RNA methyltransferase RlmH family.

Its subcellular location is the cytoplasm. The enzyme catalyses pseudouridine(1915) in 23S rRNA + S-adenosyl-L-methionine = N(3)-methylpseudouridine(1915) in 23S rRNA + S-adenosyl-L-homocysteine + H(+). Functionally, specifically methylates the pseudouridine at position 1915 (m3Psi1915) in 23S rRNA. The polypeptide is Putative ribosomal RNA large subunit methyltransferase H (Methanococcus maripaludis (strain DSM 14266 / JCM 13030 / NBRC 101832 / S2 / LL)).